Here is a 234-residue protein sequence, read N- to C-terminus: uncharacterized protein (234 aa).

The next 4 helical transmembrane spans lie at 22–42 (TFLN…IPLI), 59–79 (INWA…AYLI), 154–174 (FWIF…IFFC), and 186–206 (LLSL…IFAL).

The protein localises to the cell membrane. This is an uncharacterized protein from Escherichia coli (strain K12).